Consider the following 178-residue polypeptide: Caveolin-1 (178 aa).

N-acetylserine is present on S2. Phosphoserine is present on S2. The tract at residues 2 to 94 is required for homooligomerization; it reads SGGKYVDSEG…WKASFTTFTV (93 aa). Topologically, residues 2–104 are cytoplasmic; sequence SGGKYVDSEG…TKYWFYRLLS (103 aa). The residue at position 5 (K5) is an N6-acetyllysine; alternate. A Glycyl lysine isopeptide (Lys-Gly) (interchain with G-Cter in ubiquitin); alternate cross-link involves residue K5. Y6 carries the post-translational modification Phosphotyrosine. Residue S9 is modified to Phosphoserine. Y14 is subject to Phosphotyrosine; by ABL1. Position 25 is a phosphotyrosine (Y25). Residues K26 and K30 each participate in a glycyl lysine isopeptide (Lys-Gly) (interchain with G-Cter in ubiquitin) cross-link. Position 37 is a phosphoserine (S37). Residues K39, K47, and K57 each participate in a glycyl lysine isopeptide (Lys-Gly) (interchain with G-Cter in ubiquitin) cross-link. The interval 82–94 is interaction with CAVIN3; that stretch reads DGIWKASFTTFTV. Positions 105 to 125 form an intramembrane region, helical; that stretch reads ALFGIPMALIWGIYFAILSFL. Residues 126–178 are Cytoplasmic-facing; that stretch reads HIWAVVPCIKSFLIEIQCISRVYSIYVHTVCDPLFEAVGKIFSNVRINLQKEI. The interacts with SPRY1, SPRY2, SPRY3 and SPRY4 stretch occupies residues 131 to 142; sequence VPCIKSFLIEIQ. Residues C133, C143, and C156 are each lipidated (S-palmitoyl cysteine). Residues 149-160 form an interacts with SPRY1, SPRY2, and SPRY4 region; the sequence is SIYVHTVCDPLF. Residues 167-178 form an interacts with SPRY1, SPRY2, SPRY3 and SPRY4 region; that stretch reads FSNVRINLQKEI.

The protein belongs to the caveolin family. In terms of assembly, homooligomer. Interacts with GLIPR2. Interacts with NOSTRIN. Interacts with SNAP25 and STX1A. Interacts (via the N-terminus) with DPP4; the interaction is direct. Interacts with CTNNB1, CDH1 and JUP. Interacts with PACSIN2; this interaction induces membrane tubulation. Interacts with SLC7A9. Interacts with BMX and BTK. Interacts with TGFBR1. Interacts with CAVIN3 (via leucine-zipper domain) in a cholesterol-sensitive manner. Interacts with CAVIN1. Interacts with EHD2 in a cholesterol-dependent manner. Forms a ternary complex with UBXN6 and VCP; mediates CAV1 targeting to lysosomes for degradation. Interacts with ABCG1; this interaction regulates ABCG1-mediated cholesterol efflux. Interacts with NEU3; this interaction enhances NEU3 sialidase activity within caveola. Interacts (via C-terminus) with SPRY1, SPRY2 (via C-terminus), SPRY3, and SPRY4. Interacts with IGFBP5; this interaction allows trafficking of IGFBP5 from the plasma membrane to the nucleus. In terms of processing, phosphorylated at Tyr-14 by ABL1 in response to oxidative stress. Post-translationally, ubiquitinated. Undergo monoubiquitination and multi- and/or polyubiquitination. Monoubiquitination of N-terminal lysines promotes integration in a ternary complex with UBXN6 and VCP which promotes oligomeric CAV1 targeting to lysosomes for degradation. Ubiquitinated by ZNRF1; leading to degradation and modulation of the TLR4-mediated immune response.

Its subcellular location is the golgi apparatus membrane. It is found in the cell membrane. The protein resides in the membrane. It localises to the caveola. The protein localises to the membrane raft. Functionally, may act as a scaffolding protein within caveolar membranes. Forms a stable heterooligomeric complex with CAV2 that targets to lipid rafts and drives caveolae formation. Mediates the recruitment of CAVIN proteins (CAVIN1/2/3/4) to the caveolae. Interacts directly with G-protein alpha subunits and can functionally regulate their activity. Involved in the costimulatory signal essential for T-cell receptor (TCR)-mediated T-cell activation. Its binding to DPP4 induces T-cell proliferation and NF-kappa-B activation in a T-cell receptor/CD3-dependent manner. Recruits CTNNB1 to caveolar membranes and may regulate CTNNB1-mediated signaling through the Wnt pathway. Negatively regulates TGFB1-mediated activation of SMAD2/3 by mediating the internalization of TGFBR1 from membrane rafts leading to its subsequent degradation. Binds 20(S)-hydroxycholesterol (20(S)-OHC). This Pongo abelii (Sumatran orangutan) protein is Caveolin-1 (CAV1).